A 501-amino-acid chain; its full sequence is Glycerol kinase (501 aa).

T17 serves as a coordination point for ADP. T17, T18, and S19 together coordinate ATP. Position 17 (T17) interacts with sn-glycerol 3-phosphate. R21 serves as a coordination point for ADP. R87, E88, Y139, and D243 together coordinate sn-glycerol 3-phosphate. Residues R87, E88, Y139, D243, and Q244 each contribute to the glycerol site. The ADP site is built by T265 and G308. Residues T265, G308, Q312, and G409 each coordinate ATP. G409 and N413 together coordinate ADP.

It belongs to the FGGY kinase family.

It carries out the reaction glycerol + ATP = sn-glycerol 3-phosphate + ADP + H(+). It participates in polyol metabolism; glycerol degradation via glycerol kinase pathway; sn-glycerol 3-phosphate from glycerol: step 1/1. With respect to regulation, inhibited by fructose 1,6-bisphosphate (FBP). In terms of biological role, key enzyme in the regulation of glycerol uptake and metabolism. Catalyzes the phosphorylation of glycerol to yield sn-glycerol 3-phosphate. In Pseudomonas savastanoi pv. phaseolicola (strain 1448A / Race 6) (Pseudomonas syringae pv. phaseolicola (strain 1448A / Race 6)), this protein is Glycerol kinase.